The chain runs to 200 residues: uncharacterized protein (200 aa).

A helical membrane pass occupies residues 104-124 (SNLLICFLFLCGLYHISVFTG).

Its subcellular location is the membrane. This is an uncharacterized protein from Escherichia coli (strain K12).